The sequence spans 556 residues: 2-succinyl-5-enolpyruvyl-6-hydroxy-3-cyclohexene-1-carboxylate synthase (556 aa).

Belongs to the TPP enzyme family. MenD subfamily. As to quaternary structure, homodimer. Mg(2+) is required as a cofactor. It depends on Mn(2+) as a cofactor. Requires thiamine diphosphate as cofactor.

The catalysed reaction is isochorismate + 2-oxoglutarate + H(+) = 5-enolpyruvoyl-6-hydroxy-2-succinyl-cyclohex-3-ene-1-carboxylate + CO2. It functions in the pathway quinol/quinone metabolism; 1,4-dihydroxy-2-naphthoate biosynthesis; 1,4-dihydroxy-2-naphthoate from chorismate: step 2/7. It participates in quinol/quinone metabolism; menaquinone biosynthesis. Its function is as follows. Catalyzes the thiamine diphosphate-dependent decarboxylation of 2-oxoglutarate and the subsequent addition of the resulting succinic semialdehyde-thiamine pyrophosphate anion to isochorismate to yield 2-succinyl-5-enolpyruvyl-6-hydroxy-3-cyclohexene-1-carboxylate (SEPHCHC). This Mycobacterium leprae (strain Br4923) protein is 2-succinyl-5-enolpyruvyl-6-hydroxy-3-cyclohexene-1-carboxylate synthase.